The primary structure comprises 409 residues: Peptidase T (409 aa).

Residue His78 participates in Zn(2+) binding. Asp80 is a catalytic residue. Asp140 lines the Zn(2+) pocket. The active-site Proton acceptor is the Glu173. Positions 174, 196, and 379 each coordinate Zn(2+).

The protein belongs to the peptidase M20B family. Requires Zn(2+) as cofactor.

The protein resides in the cytoplasm. The enzyme catalyses Release of the N-terminal residue from a tripeptide.. Cleaves the N-terminal amino acid of tripeptides. This chain is Peptidase T, found in Salmonella dublin (strain CT_02021853).